The following is a 319-amino-acid chain: ATP-dependent 6-phosphofructokinase (319 aa).

G11 contributes to the ATP binding site. Residue 21–25 (RAVVR) coordinates ADP. ATP-binding positions include 72–73 (RC) and 102–105 (GDGS). D103 is a binding site for Mg(2+). 125–127 (TID) contacts substrate. D127 serves as the catalytic Proton acceptor. R154 contributes to the ADP binding site. Residues R162 and 169–171 (MGR) contribute to the substrate site. ADP-binding positions include 185–187 (GAE), R211, and 213–215 (KKH). Residues E222, R243, and 249–252 (HIQR) contribute to the substrate site.

The protein belongs to the phosphofructokinase type A (PFKA) family. ATP-dependent PFK group I subfamily. Prokaryotic clade 'B1' sub-subfamily. As to quaternary structure, homotetramer. The cofactor is Mg(2+).

It is found in the cytoplasm. The enzyme catalyses beta-D-fructose 6-phosphate + ATP = beta-D-fructose 1,6-bisphosphate + ADP + H(+). It participates in carbohydrate degradation; glycolysis; D-glyceraldehyde 3-phosphate and glycerone phosphate from D-glucose: step 3/4. Its activity is regulated as follows. Allosterically activated by ADP and other diphosphonucleosides, and allosterically inhibited by phosphoenolpyruvate. Its function is as follows. Catalyzes the phosphorylation of D-fructose 6-phosphate to fructose 1,6-bisphosphate by ATP, the first committing step of glycolysis. This is ATP-dependent 6-phosphofructokinase from Shouchella clausii (strain KSM-K16) (Alkalihalobacillus clausii).